The chain runs to 381 residues: O-antigen chain mannosyltransferase B (381 aa).

Belongs to the glycosyltransferase group 1 family. Glycosyltransferase 4 subfamily.

The enzyme catalyses alpha-D-mannosyl-(1-&gt;3)-N-acetyl-alpha-D-glucosaminyl-di-trans,octa-cis-undecaprenyl diphosphate + 2 GDP-alpha-D-mannose = alpha-D-mannosyl-(1-&gt;3)-alpha-D-mannosyl-(1-&gt;3)-alpha-D-mannosyl-(1-&gt;3)-N-acetyl-alpha-D-glucosaminyl-di-trans,octa-cis-undecaprenyl diphosphate + 2 GDP + 2 H(+). The protein operates within bacterial outer membrane biogenesis; LPS O-antigen biosynthesis. Functionally, mannosyltransferase involved in the biosynthesis of the repeat unit of the lipopolysaccharide (LPS) O-antigen region. Catalyzes the transfer of two alpha-(1-&gt;3)-linked mannose residues to the product of the WbdC enzyme during the synthesis of the adapter region. The polypeptide is O-antigen chain mannosyltransferase B (Escherichia coli).